Here is a 583-residue protein sequence, read N- to C-terminus: NudC domain-containing protein 1 (583 aa).

Ser-8 is modified (phosphoserine). The region spanning 273–361 (IKEPLYYWQQ…NEGLTWPELV (89 aa)) is the CS domain. Phosphoserine is present on Ser-388.

As to expression, isoform 1 is specifically expressed in leukemias and a variety of solid tumor cell lines and is also detected in testis and heart. Isoform 2 is predominantly expressed in testis and weakly expressed in tumor cells.

The protein localises to the cytoplasm. The protein resides in the nucleus. The protein is NudC domain-containing protein 1 of Homo sapiens (Human).